We begin with the raw amino-acid sequence, 96 residues long: Pyrimidine/purine nucleoside phosphorylase (96 aa).

This sequence belongs to the nucleoside phosphorylase PpnP family.

It catalyses the reaction a purine D-ribonucleoside + phosphate = a purine nucleobase + alpha-D-ribose 1-phosphate. The enzyme catalyses adenosine + phosphate = alpha-D-ribose 1-phosphate + adenine. The catalysed reaction is cytidine + phosphate = cytosine + alpha-D-ribose 1-phosphate. It carries out the reaction guanosine + phosphate = alpha-D-ribose 1-phosphate + guanine. It catalyses the reaction inosine + phosphate = alpha-D-ribose 1-phosphate + hypoxanthine. The enzyme catalyses thymidine + phosphate = 2-deoxy-alpha-D-ribose 1-phosphate + thymine. The catalysed reaction is uridine + phosphate = alpha-D-ribose 1-phosphate + uracil. It carries out the reaction xanthosine + phosphate = alpha-D-ribose 1-phosphate + xanthine. Functionally, catalyzes the phosphorolysis of diverse nucleosides, yielding D-ribose 1-phosphate and the respective free bases. Can use uridine, adenosine, guanosine, cytidine, thymidine, inosine and xanthosine as substrates. Also catalyzes the reverse reactions. This is Pyrimidine/purine nucleoside phosphorylase from Serratia proteamaculans (strain 568).